A 269-amino-acid chain; its full sequence is Formamidopyrimidine-DNA glycosylase (269 aa).

The active-site Schiff-base intermediate with DNA is the P2. E3 acts as the Proton donor in catalysis. The Proton donor; for beta-elimination activity role is filled by K57. H90, R109, and K150 together coordinate DNA. The FPG-type zinc finger occupies 235 to 269 (QVYGRKGEPCRICGMPVVGTKHAQRATFYCRQCQK). R259 (proton donor; for delta-elimination activity) is an active-site residue.

Belongs to the FPG family. In terms of assembly, monomer. Zn(2+) serves as cofactor.

The enzyme catalyses Hydrolysis of DNA containing ring-opened 7-methylguanine residues, releasing 2,6-diamino-4-hydroxy-5-(N-methyl)formamidopyrimidine.. It catalyses the reaction 2'-deoxyribonucleotide-(2'-deoxyribose 5'-phosphate)-2'-deoxyribonucleotide-DNA = a 3'-end 2'-deoxyribonucleotide-(2,3-dehydro-2,3-deoxyribose 5'-phosphate)-DNA + a 5'-end 5'-phospho-2'-deoxyribonucleoside-DNA + H(+). In terms of biological role, involved in base excision repair of DNA damaged by oxidation or by mutagenic agents. Acts as a DNA glycosylase that recognizes and removes damaged bases. Has a preference for oxidized purines, such as 7,8-dihydro-8-oxoguanine (8-oxoG). Has AP (apurinic/apyrimidinic) lyase activity and introduces nicks in the DNA strand. Cleaves the DNA backbone by beta-delta elimination to generate a single-strand break at the site of the removed base with both 3'- and 5'-phosphates. The polypeptide is Formamidopyrimidine-DNA glycosylase (Klebsiella pneumoniae subsp. pneumoniae (strain ATCC 700721 / MGH 78578)).